Reading from the N-terminus, the 234-residue chain is Lactate utilization protein C 1 (234 aa).

Belongs to the LutC/YkgG family.

In terms of biological role, is involved in L-lactate degradation and allows cells to grow with lactate as the sole carbon source. This Bacillus mycoides (strain KBAB4) (Bacillus weihenstephanensis) protein is Lactate utilization protein C 1.